A 195-amino-acid chain; its full sequence is HTH-type transcriptional regulator BetI (195 aa).

Positions 8 to 68 (PIRRQQLIEA…ATMRYLISHL (61 aa)) constitute an HTH tetR-type domain. The H-T-H motif DNA-binding region spans 31 to 50 (SIVQIARRAGVSNGIISHYF).

Its pathway is amine and polyamine biosynthesis; betaine biosynthesis via choline pathway [regulation]. Its function is as follows. Repressor involved in the biosynthesis of the osmoprotectant glycine betaine. It represses transcription of the choline transporter BetT and the genes of BetAB involved in the synthesis of glycine betaine. In Pectobacterium carotovorum subsp. carotovorum (strain PC1), this protein is HTH-type transcriptional regulator BetI.